The chain runs to 21 residues: Fibrinogen beta chain (21 aa).

At Gln-1 the chain carries Pyrrolidone carboxylic acid. Tyr-6 carries the post-translational modification Sulfotyrosine.

Heterohexamer; disulfide linked. Contains 2 sets of 3 non-identical chains (alpha, beta and gamma). The 2 heterotrimers are in head to head conformation with the N-termini in a small central domain. Conversion of fibrinogen to fibrin is triggered by thrombin, which cleaves fibrinopeptides A and B from alpha and beta chains, and thus exposes the N-terminal polymerization sites responsible for the formation of the soft clot.

Its subcellular location is the secreted. In terms of biological role, cleaved by the protease thrombin to yield monomers which, together with fibrinogen alpha (FGA) and fibrinogen gamma (FGG), polymerize to form an insoluble fibrin matrix. Fibrin has a major function in hemostasis as one of the primary components of blood clots. In addition, functions during the early stages of wound repair to stabilize the lesion and guide cell migration during re-epithelialization. Was originally thought to be essential for platelet aggregation, based on in vitro studies using anticoagulated blood. However subsequent studies have shown that it is not absolutely required for thrombus formation in vivo. Enhances expression of SELP in activated platelets. Maternal fibrinogen is essential for successful pregnancy. Fibrin deposition is also associated with infection, where it protects against IFNG-mediated hemorrhage. May also facilitate the antibacterial immune response via both innate and T-cell mediated pathways. This chain is Fibrinogen beta chain (FGB), found in Rangifer tarandus (Reindeer).